Here is a 984-residue protein sequence, read N- to C-terminus: MQEHLVVTLDGKDYLVEPGTNLLEFIKSQDTFVPSICYNESMGPIQTCDTCTVEIDGKIERSCSTVIDRPMTVNTVNNDVKDAQKEALDRILEKHMLYCTVCDYNNGDCEIHNTMDAWGLQHQTYEYKEKPYEKDYGPFYRYDPNQCILCGRCVEACQDIEVNETIRIDWDREHPRVIWDNDVPINESSCVSCGQCATVCPCNAMMEVNMEGNAGYMTDTEPGSLAAMIDLTKKAEPGYGPLFAISDSEAEMRKERIKKTKTVCTYCGVGCSFEVWTKDREILKVQPSHDSPANKIVTCVKGKFSWGHINSDQRLTKPLVRKNGEFHEVEWDEALNVIADNFTSIKEKYGPDALSFISSSKATNEESYLMQKLARQVIGTNNVDNCSRYCQAPATKGLFRTVGHGGDSGSIEDLEKAAMSVLIGTNTAEAHPVIASRMKRAQKLFGQKIHVFDIRKHEMAERADRFYQPKPGTDLAWLSAVTKYIIDHDLHDKAFIDEWVDDFDEYYKSLETFTMAFAEEATGIPESELIKFAEECAKAESVVICWAMGITQQDIGSDSSTAISNLLLVTGNYRRPGTGAYPLRGHNNVQGCSDMGSMPDKITGYQSIEADDIRAKFEKEYGVKLNPKAGKDNHEMVEGIHDGEVHSLYLYGEDTGIVDSNINFVQAAFEKLDFMVVQDEFLTFTATYADVVLPASPSLEKDGTFTNTERRIQRLYQALEPLGDSKPDWKIFQAIANRLGFDWNYKHPSEIMDEVARLTPLYAGVSYDRLEGFNSLQWPVQPDGTDEPILYLEGFNFDNGKAKLFPLSFDNYFKQDEIYDIHVNNGRLLEHFHEGNMTYQTPMIKYKVPRAFVEISPELAEDRGIHEGAEVKLISETGEAVLQVHVTDRVKGKEIYIPLNNDAMENGDLGAINLLTNSDVDQYTDTPSYKRTSCRLEVITKRGKSPLNPNNFRVNKKRHPQYSVQVQKKWERSDYVFPGNQVDK.

In terms of domain architecture, 2Fe-2S ferredoxin-type spans 3 to 79; it reads EHLVVTLDGK…PMTVNTVNND (77 aa). [2Fe-2S] cluster-binding residues include Cys37, Cys48, Cys51, and Cys63. The 41-residue stretch at 79-119 folds into the 4Fe-4S His(Cys)3-ligated-type domain; the sequence is DVKDAQKEALDRILEKHMLYCTVCDYNNGDCEIHNTMDAWG. Positions 95, 99, 102, 109, 147, 150, 153, 157, 190, 193, 196, 200, 264, 267, 271, and 299 each coordinate [4Fe-4S] cluster. 4Fe-4S ferredoxin-type domains are found at residues 138–165 and 181–211; these read PFYR…VNET and NDVP…VNME. Residues 252–984 are formate dehydrogenase; the sequence is MRKERIKKTK…YVFPGNQVDK (733 aa). The 4Fe-4S Mo/W bis-MGD-type domain maps to 257 to 313; sequence IKKTKTVCTYCGVGCSFEVWTKDREILKVQPSHDSPANKIVTCVKGKFSWGHINSDQ.

In the C-terminal section; belongs to the prokaryotic molybdopterin-containing oxidoreductase family. Requires [2Fe-2S] cluster as cofactor. It depends on [4Fe-4S] cluster as a cofactor. Mo-bis(molybdopterin guanine dinucleotide) is required as a cofactor.

The catalysed reaction is formate + NAD(+) = CO2 + NADH. This is Putative formate dehydrogenase SAV2309 from Staphylococcus aureus (strain Mu50 / ATCC 700699).